The primary structure comprises 804 residues: MVRPAQVRALSGLARSATFVRLLPSQSQNALRCASLPVSRLGALPLRATTQITSAPLRQWHQIRNSSATATASLAEQAAADPEGLSQAEIISNIDAEEWKRISKVRNIGIAAHIDSGKTTATERVLFYTGRINAIHEVRGRDSVGAKMDSMDLEREKGITIQSAATFCDWVKKENGKEEKYHFNLIDTPGHIDFTIEVERALRVLDGAVMILCAVSGVQSQTITVDRQMKRYNVPRISFVNKMDRMGANPFKAIDQINNKLKLPAAAVQVPIGAEDEFQGVVDLIRMKAIYNEGPRGETIVEKDEIPEHIKPLAEERRRILIETLADVDDEIAEIFLDEREPTIEQIKAAIRRATIALKFTPVFMGSALADKSIQPMLDGVCDYLPNPSEVTNLALDQKRKEAQVKLLPYGSQPFVGLAFKLEESNFGQLTYIRVYQGTLRKGANVFNARNDKKVKVPRIVRMHSNEMEEVQEIGAGEICAVFGVDCASGDTFTDGQLAYTMSSMFVPEPVISLSIKPKNNKDSANFSKAMARFQREDPTFRVSYDTESEQTIISGMGELHLDIYVERMRREYKVDCETGQPQVAYRETIGRRVEFDHLLKKQSGGPGDYARVVGWMEPSESLEENKFEEQIVGGAISEKFLFACEKGFNLACEKGPLIGHKVLGTKMVINDGATHMTDSSEMSFKNATQQAFRKAFMESQPHVLEPLMKTVVTAPIEFQGDVIGLLNKRNATINDSEIGVDEFTVYADCSLNGMFGFSSHLRAATQGKGEYTMEFSHYEKAPGQLQKELVQKYLKAQADRHKK.

A mitochondrion-targeting transit peptide spans 1–9 (MVRPAQVRA). One can recognise a tr-type G domain in the interval 103–389 (SKVRNIGIAA…GVCDYLPNPS (287 aa)). Residues 112–119 (AHIDSGKT), 187–191 (DTPGH), and 241–244 (NKMD) contribute to the GTP site.

It belongs to the TRAFAC class translation factor GTPase superfamily. Classic translation factor GTPase family. EF-G/EF-2 subfamily.

It localises to the mitochondrion. It functions in the pathway protein biosynthesis; polypeptide chain elongation. In terms of biological role, mitochondrial GTPase that catalyzes the GTP-dependent ribosomal translocation step during translation elongation. During this step, the ribosome changes from the pre-translocational (PRE) to the post-translocational (POST) state as the newly formed A-site-bound peptidyl-tRNA and P-site-bound deacylated tRNA move to the P and E sites, respectively. Catalyzes the coordinated movement of the two tRNA molecules, the mRNA and conformational changes in the ribosome. The chain is Elongation factor G, mitochondrial (mef1) from Talaromyces stipitatus (strain ATCC 10500 / CBS 375.48 / QM 6759 / NRRL 1006) (Penicillium stipitatum).